Consider the following 334-residue polypeptide: Heat-inducible transcription repressor HrcA (334 aa).

This sequence belongs to the HrcA family.

Negative regulator of class I heat shock genes (grpE-dnaK-dnaJ and groELS operons). Prevents heat-shock induction of these operons. This chain is Heat-inducible transcription repressor HrcA, found in Albidiferax ferrireducens (strain ATCC BAA-621 / DSM 15236 / T118) (Rhodoferax ferrireducens).